Reading from the N-terminus, the 132-residue chain is Small ribosomal subunit protein uS8 (132 aa).

This sequence belongs to the universal ribosomal protein uS8 family. Part of the 30S ribosomal subunit. Contacts proteins S5 and S12.

One of the primary rRNA binding proteins, it binds directly to 16S rRNA central domain where it helps coordinate assembly of the platform of the 30S subunit. The sequence is that of Small ribosomal subunit protein uS8 from Bradyrhizobium sp. (strain BTAi1 / ATCC BAA-1182).